We begin with the raw amino-acid sequence, 710 residues long: Exocyst complex component 5 (710 aa).

Positions 44 to 96 (DTFIQTIKDLKILQEKQQSKCERLEESLRQEKESHAKKIAKLQERHQTAIDVF) form a coiled coil.

Belongs to the SEC10 family. As to quaternary structure, the exocyst complex is composed of Sec3/Exoc1, Sec5/Exoc2, Sec6/Exoc3, Sec8/Exoc4, Sec10/Exoc5, Sec15/Exoc6, Exo70/Exoc7 and Exo84/Exoc8.

Component of the exocyst complex involved in the docking of exocytic vesicles with fusion sites on the plasma membrane. The polypeptide is Exocyst complex component 5 (Drosophila melanogaster (Fruit fly)).